Consider the following 487-residue polypeptide: Virulence sensor histidine kinase PhoQ (487 aa).

Residues 1–16 lie on the Cytoplasmic side of the membrane; the sequence is MNKFARHFLPLSLRVR. The chain crosses the membrane as a helical span at residues 17–37; sequence FLLATAGVVLVLSLAYGIVAL. Residues 38–193 lie on the Periplasmic side of the membrane; sequence VGYSVSFDKT…ELKRSYMVWS (156 aa). The a divalent metal cation site is built by Asp-151 and Asp-152. The chain crosses the membrane as a helical span at residues 194-214; sequence WFVYVLAANLLLVIPLLWIAA. Residues 215–266 enclose the HAMP domain; that stretch reads WWSLRPIEALAREVRELEDHHREMLNPETTRELTSLVRNLNQLLKSERERYN. Over 215–487 the chain is Cytoplasmic; the sequence is WWSLRPIEAL…GRQHPTQKEE (273 aa). The region spanning 274-481 is the Histidine kinase domain; the sequence is DLTHSLKTPL…RMEVVFGRQH (208 aa). At His-277 the chain carries Phosphohistidine; by autocatalysis. Residue Asn-386 participates in Mg(2+) binding. Residues 386-394, 416-421, and 435-447 each bind ATP; these read NVLDNACKY, DDGPGI, and RADT…GVGL. Gln-443 serves as a coordination point for Mg(2+).

Homodimer.

It localises to the cell inner membrane. It catalyses the reaction ATP + protein L-histidine = ADP + protein N-phospho-L-histidine.. Its function is as follows. Member of the two-component regulatory system PhoP/PhoQ which regulates the expression of genes involved in virulence and resistance to host defense antimicrobial peptides. In low periplasmic Mg(2+), PhoQ functions as a membrane-associated protein kinase that undergoes autophosphorylation and subsequently transfers the phosphate to PhoP, which results in the expression of PhoP-activated genes (PAG) and repression of PhoP-repressed genes (PRG). In high periplasmic Mg(2+), acts as a protein phosphatase that dephosphorylates phospho-PhoP, which results in the repression of PAG and may lead to expression of some PRG. In Salmonella paratyphi A (strain ATCC 9150 / SARB42), this protein is Virulence sensor histidine kinase PhoQ (phoQ).